We begin with the raw amino-acid sequence, 290 residues long: Small ribosomal subunit biogenesis GTPase RsgA (290 aa).

The 158-residue stretch at 63–220 (KNELIRPPIA…IADTPGFSNL (158 aa)) folds into the CP-type G domain. GTP-binding positions include 112-115 (NKFD) and 162-170 (GPSGVGKST). Residues C244, C249, H251, and C257 each coordinate Zn(2+).

It belongs to the TRAFAC class YlqF/YawG GTPase family. RsgA subfamily. In terms of assembly, monomer. Associates with 30S ribosomal subunit, binds 16S rRNA. Requires Zn(2+) as cofactor.

The protein localises to the cytoplasm. Its function is as follows. One of several proteins that assist in the late maturation steps of the functional core of the 30S ribosomal subunit. Helps release RbfA from mature subunits. May play a role in the assembly of ribosomal proteins into the subunit. Circularly permuted GTPase that catalyzes slow GTP hydrolysis, GTPase activity is stimulated by the 30S ribosomal subunit. This is Small ribosomal subunit biogenesis GTPase RsgA from Carboxydothermus hydrogenoformans (strain ATCC BAA-161 / DSM 6008 / Z-2901).